Consider the following 578-residue polypeptide: Triokinase/FMN cyclase (578 aa).

A DhaK domain is found at 9 to 336; that stretch reads SVEGCADDAL…IDAETTAKAW (328 aa). Residues 56-59, lysine 109, and aspartate 114 each bind dihydroxyacetone; that span reads GSGH. Histidine 221 acts as the Tele-hemiaminal-histidine intermediate in catalysis. The DhaL domain occupies 372–571; sequence KQMALVLDRI…AAAIFRAILE (200 aa). ATP-binding positions include 401–404, 446–447, glycine 486, and 494–495; these read DGDC, SS, and TM. Serine 511 and serine 545 each carry phosphoserine. ATP is bound at residue 556-558; the sequence is DPG.

Belongs to the dihydroxyacetone kinase (DAK) family. As to quaternary structure, homodimer. Interacts with IFIH1 (via the CARD domains), the interaction is inhibited by viral infection. It depends on Mg(2+) as a cofactor. Mn(2+) is required as a cofactor. The cofactor is Co(2+).

The enzyme catalyses dihydroxyacetone + ATP = dihydroxyacetone phosphate + ADP + H(+). The catalysed reaction is D-glyceraldehyde + ATP = D-glyceraldehyde 3-phosphate + ADP + H(+). It carries out the reaction FAD = riboflavin cyclic-4',5'-phosphate + AMP + H(+). Each activity is inhibited by the substrate(s) of the other. Catalyzes both the phosphorylation of dihydroxyacetone and of glyceraldehyde, and the splitting of ribonucleoside diphosphate-X compounds among which FAD is the best substrate. Represses IFIH1-mediated cellular antiviral response. The chain is Triokinase/FMN cyclase from Mus musculus (Mouse).